A 599-amino-acid polypeptide reads, in one-letter code: Elongation factor 4 (599 aa).

Residues 5-187 (KNIRNFSIIA…QLVERIPAPE (183 aa)) form the tr-type G domain. GTP-binding positions include 17–22 (DHGKST) and 134–137 (NKID).

The protein belongs to the TRAFAC class translation factor GTPase superfamily. Classic translation factor GTPase family. LepA subfamily.

The protein resides in the cell inner membrane. The enzyme catalyses GTP + H2O = GDP + phosphate + H(+). Its function is as follows. Required for accurate and efficient protein synthesis under certain stress conditions. May act as a fidelity factor of the translation reaction, by catalyzing a one-codon backward translocation of tRNAs on improperly translocated ribosomes. Back-translocation proceeds from a post-translocation (POST) complex to a pre-translocation (PRE) complex, thus giving elongation factor G a second chance to translocate the tRNAs correctly. Binds to ribosomes in a GTP-dependent manner. This is Elongation factor 4 from Alcanivorax borkumensis (strain ATCC 700651 / DSM 11573 / NCIMB 13689 / SK2).